We begin with the raw amino-acid sequence, 273 residues long: Putative deoxyribonuclease TATDN1 homolog (273 aa).

Residues glutamate 91, histidine 125, histidine 147, and aspartate 195 each coordinate a divalent metal cation.

This sequence belongs to the metallo-dependent hydrolases superfamily. TatD-type hydrolase family. Requires a divalent metal cation as cofactor.

It is found in the nucleus. In terms of biological role, putative deoxyribonuclease. This chain is Putative deoxyribonuclease TATDN1 homolog, found in Encephalitozoon cuniculi (strain GB-M1) (Microsporidian parasite).